Consider the following 135-residue polypeptide: Early nodulin-5 (135 aa).

A signal peptide spans 1–23 (MASSSSPIFLMIIFSMWLLFSYS).

In terms of tissue distribution, invasion zone and early symbiotic zone.

In terms of biological role, involved in the infection process during the plant-rhizobium interaction. This Pisum sativum (Garden pea) protein is Early nodulin-5 (ENOD5).